A 388-amino-acid chain; its full sequence is Succinate--CoA ligase [ADP-forming] subunit beta (388 aa).

One can recognise an ATP-grasp domain in the interval 9-246 (KDILRQFGVP…FEEEDPAEVL (238 aa)). ATP contacts are provided by residues K46, 53-55 (GRG), E99, A102, and E107. 2 residues coordinate Mg(2+): N201 and D215. Residues N266 and 323–325 (GIM) contribute to the substrate site.

It belongs to the succinate/malate CoA ligase beta subunit family. Heterotetramer of two alpha and two beta subunits. Mg(2+) is required as a cofactor.

It catalyses the reaction succinate + ATP + CoA = succinyl-CoA + ADP + phosphate. The catalysed reaction is GTP + succinate + CoA = succinyl-CoA + GDP + phosphate. The protein operates within carbohydrate metabolism; tricarboxylic acid cycle; succinate from succinyl-CoA (ligase route): step 1/1. Functionally, succinyl-CoA synthetase functions in the citric acid cycle (TCA), coupling the hydrolysis of succinyl-CoA to the synthesis of either ATP or GTP and thus represents the only step of substrate-level phosphorylation in the TCA. The beta subunit provides nucleotide specificity of the enzyme and binds the substrate succinate, while the binding sites for coenzyme A and phosphate are found in the alpha subunit. The sequence is that of Succinate--CoA ligase [ADP-forming] subunit beta from Verminephrobacter eiseniae (strain EF01-2).